The primary structure comprises 1535 residues: Protein artichoke (1535 aa).

Residues 1–19 (MMLLPIFLLLCIGINLIRA) form the signal peptide. 34 LRR repeats span residues 64 to 87 (KGRIDELVLENNQLPALPGRFFGS), 89 to 110 (QIVRLMLRHNSIERVSNGWLNE), 112 to 135 (ENGLVEIFVVEPQLRSIPAESLNG), 136 to 157 (MINMLAITIQSEELKHLPDFSG), 158 to 181 (LLSLTYLSVQTGALQELPSHLFRH), 183 to 206 (PKLQHIHITGGSGLTRLEAGLFDG), 207 to 230 (LISLKNLDLSHNGLNWIHLRALSR), 231 to 256 (LPNLVSLKLSHNQISDVGMVGRIVKD), 257 to 280 (LEHLKKLRLDNNLITVIEDGSFVD), 281 to 304 (LPNLSELHLNDNRITELQYGAFLR), 306 to 328 (PQLKTIYLQNNLIRRIHPESLLQ), 331 to 356 (GSGVEAVHMYNNEIGHVEALRALLDA), 357 to 380 (LPRLRYLDMSGNLLSELPYGALRG), 382 to 404 (GTLEQLHLNHNHLRLIERDALMA), 406 to 429 (PALRELRMRNNSLSSDLPLPFWNL), 430 to 452 (PGLKGLDLAQNQFARVDSQLLAG), 453 to 476 (LPSLRRLDLSENGLIELAPNSFRH), 478 to 500 (PLLETLNISSNELTKIHSSTLIH), 521 to 545 (LPRIVERISLKGNQITSLPAAASKD), 548 to 571 (LPNLRMLDLSQNRIEQLPRHGFQG), 573 to 595 (MELRVLSLAQNELRQLKDTSFIG), 597 to 619 (QRLELLHLQENQLGEADERALLP), 620 to 643 (LAELRNLNLQSNKLEAITDNFFSN), 645 to 667 (SRLEQLDLSRNLIRSISPTAFDT), 669 to 691 (RSLEYLDLSGNALLDISVGLGNL), 692 to 714 (NNLRDIDLSYNQISRIQSDVIGG), 716 to 738 (RNVVEIRLSNNLIVELQQGTFRN), 739 to 762 (LPKLQYLDLSSNEIRNVEPGALKG), 764 to 786 (DELQEFVLADNKLVELKDHVFEE), 788 to 810 (PSLLASHFQYNKLRYISPESFHN), 811 to 834 (ANSLVFLNLSNNHFRNMENIGLRS), 835 to 858 (MRNLEVLDLSTNGVKLVSTMPLKA), 860 to 882 (NWLVELKMDNNQICRIQGSPFET), and 883 to 906 (MPRLRVLSMRNNQLRSIKERTFRN). The LRRCT domain occupies 919–963 (NPIDCNCEMQWLSVWLQETNFPYPGPKCQDGRLLRSARMERSLCV). 4 disordered regions span residues 1036 to 1055 (HSAISTSQRPKPTPTINSNI), 1253 to 1331 (TQAR…DSQY), 1377 to 1416 (VTTTTPQSPSDNQVTLAGPTSTVPPPPPASPPLRGGGRST), and 1429 to 1449 (AQPTAEEYQRTTPSGDNEGVA). Polar residues predominate over residues 1253–1270 (TQARPKPTKSSGESSETA). Low complexity-rich tracts occupy residues 1271 to 1285 (TYEVTETTPDITTTT) and 1293 to 1315 (TSTTKASTTTTRSTTTTSTTQVT). Composition is skewed to polar residues over residues 1316 to 1328 (PAENNASSSTELD) and 1377 to 1391 (VTTTTPQSPSDNQVT). Over residues 1398 to 1407 (TVPPPPPASP) the composition is skewed to pro residues.

The protein localises to the secreted. The protein resides in the extracellular space. It localises to the extracellular matrix. Its subcellular location is the cytoplasm. In terms of biological role, required for normal morphology and function of ciliated sensory organs. In Drosophila melanogaster (Fruit fly), this protein is Protein artichoke.